The following is a 286-amino-acid chain: Shikimate dehydrogenase (NADP(+)) (286 aa).

Shikimate-binding positions include 19–21 (SLS) and Thr-66. Lys-70 serves as the catalytic Proton acceptor. Residues Asn-91 and Asp-107 each contribute to the shikimate site. Residues 129 to 133 (GSGGA) and Leu-229 each bind NADP(+). Residue Tyr-231 participates in shikimate binding. NADP(+) is bound at residue Gly-252.

Belongs to the shikimate dehydrogenase family. As to quaternary structure, homodimer.

It carries out the reaction shikimate + NADP(+) = 3-dehydroshikimate + NADPH + H(+). Its pathway is metabolic intermediate biosynthesis; chorismate biosynthesis; chorismate from D-erythrose 4-phosphate and phosphoenolpyruvate: step 4/7. Its function is as follows. Involved in the biosynthesis of the chorismate, which leads to the biosynthesis of aromatic amino acids. Catalyzes the reversible NADPH linked reduction of 3-dehydroshikimate (DHSA) to yield shikimate (SA). This Prochlorococcus marinus (strain AS9601) protein is Shikimate dehydrogenase (NADP(+)).